A 214-amino-acid polypeptide reads, in one-letter code: Large ribosomal subunit protein uL16 (214 aa).

R32 carries the citrulline modification. Residue K175 forms a Glycyl lysine isopeptide (Lys-Gly) (interchain with G-Cter in SUMO2) linkage. Residue K188 forms a Glycyl lysine isopeptide (Lys-Gly) (interchain with G-Cter in ubiquitin) linkage.

The protein belongs to the universal ribosomal protein uL16 family. Component of the large ribosomal subunit. Mature ribosomes consist of a small (40S) and a large (60S) subunit. The 40S subunit contains about 33 different proteins and 1 molecule of RNA (18S). The 60S subunit contains about 49 different proteins and 3 molecules of RNA (28S, 5.8S and 5S). In terms of processing, citrullinated by PADI4. Ufmylated by UFL1.

It localises to the cytoplasm. In terms of biological role, component of the large ribosomal subunit. Plays a role in the formation of actively translating ribosomes. May play a role in the embryonic brain development. This is Large ribosomal subunit protein uL16 from Pongo abelii (Sumatran orangutan).